The sequence spans 354 residues: Squamosa promoter-binding-like protein 15 (354 aa).

A disordered region spans residues 1 to 25; sequence MELLMCSGQAESGGSSSTESSSLSG. Residues 7–25 are compositionally biased toward low complexity; it reads SGQAESGGSSSTESSSLSG. Residues 56-133 form an SBP-type zinc finger; it reads TARCQVEGCR…ACHNERRRKP (78 aa). Zn(2+) is bound by residues cysteine 59, cysteine 64, cysteine 81, histidine 84, cysteine 100, cysteine 103, histidine 107, and cysteine 119. The Bipartite nuclear localization signal signature appears at 116–132; sequence KRSCRRRLACHNERRRK.

The cofactor is Zn(2+).

It is found in the nucleus. In terms of biological role, trans-acting factor that binds specifically to the consensus nucleotide sequence 5'-TNCGTACAA-3'. This is Squamosa promoter-binding-like protein 15 (SPL15) from Arabidopsis thaliana (Mouse-ear cress).